We begin with the raw amino-acid sequence, 553 residues long: Putative transport protein YidE (553 aa).

A run of 5 helical transmembrane segments spans residues 4–24 (IALTVSVLALVAVVGLWIGNI), 28–48 (GVGFGIGGVLFGGIIVGHFVD), 65–85 (FGLILFVYTIGIQVGPGFFAS), 95–115 (LFAVLIVIMGGLVTAILHKIF), and 158–178 (MSYAMAYPFGICGILLTMWLM). RCK C-terminal domains follow at residues 192 to 276 (KHES…VIGK) and 279 to 361 (DTSL…VVGN). A run of 6 helical transmembrane segments spans residues 371–391 (MLPVFIGIGLGVLLGSIPLFV), 393–413 (GFPVALKLGLAGGPLIMALIL), 437–457 (LGIVLFLAVVGLKSGGDFVDT), 464–484 (LSWIGYGIFITAIPLITVGLL), 493–513 (YLTLCGMLAGSMTDPPALAFA), and 533–553 (LVMFLRIITPQLLAVIFWGMG).

This sequence belongs to the AAE transporter (TC 2.A.81) family. YidE subfamily.

It is found in the cell membrane. The polypeptide is Putative transport protein YidE (Salmonella newport (strain SL254)).